The chain runs to 536 residues: MTSGQSKHEIRDMKFDVLVVGEGLAALTLLLHLPPSLKIGVISRNKYDEPSSYWAQGGISAVFSTDDDHDKHIRDTLLAGDGLCDEAAVRQIVCEGGDVLRWLIDQGVPFTREDGEIHLTREGGHSERRVAHVDDMTGRGIMRALQAKVAQLPNVIWIRQYEAVELLSDGQAVSGVIAESLADGEVTVFSAPTVVLAAGGLTGLYQYATNPHASKGEAIAMAWRAGATIENLEFVQFHPTAFQIEGRVISLITEAVRGEGGLLYNVANERFMPGYSSQQELAPRDVVARAIYSEMQAHGTSHVWLDITHQGTAFVEQHFPNLVEITRAHGCDLSQHRVPVSPAAHYTCGGIGADVAGRTNIEGLYAIGEVANCGLHGANRLASNSLLECVVMGKACAQSVTDTAGSASRLRLTLPERIETPFHPNLLADLRAILWNHAGIVRSNTGLEIGLQNMAQLQERHASVLPYGQALRAQNIFDAAHLVLLSAAARKESRGGHFNKDHADKAEAQTTQIPGVPVNFWAAGENASHAAQLAAA.

FAD contacts are provided by residues 22–25 and 51–58; these read EGLA and SSYWAQGG. Arginine 284 acts as the Proton donor/acceptor in catalysis. FAD is bound by residues glutamate 369 and 385–386; that span reads SL.

This sequence belongs to the FAD-dependent oxidoreductase 2 family. NadB subfamily. The cofactor is FAD.

The protein localises to the cytoplasm. The catalysed reaction is L-aspartate + O2 = iminosuccinate + H2O2. The protein operates within cofactor biosynthesis; NAD(+) biosynthesis; iminoaspartate from L-aspartate (oxidase route): step 1/1. Its function is as follows. Catalyzes the oxidation of L-aspartate to iminoaspartate, the first step in the de novo biosynthesis of NAD(+). In Ralstonia nicotianae (strain ATCC BAA-1114 / GMI1000) (Ralstonia solanacearum), this protein is L-aspartate oxidase 2 (nadB2).